We begin with the raw amino-acid sequence, 1499 residues long: DENN domain-containing protein 4B (1499 aa).

Positions 26 to 45 (PEEKWVPEPTGPLRPPRPAE) are disordered. Positions 34–44 (PTGPLRPPRPA) are enriched in pro residues. An MABP domain is found at 44–203 (AEPITDVAVI…AVYLCYKVGL (160 aa)). A uDENN domain is found at 195–369 (VYLCYKVGLA…NVPFPSPQRP (175 aa)). The 137-residue stretch at 390-526 (PLPLSGASFL…PYKLLLATLT (137 aa)) folds into the cDENN domain. A dDENN domain is found at 528–644 (LYQQLDQTYT…ECSFGSARHA (117 aa)). The disordered stretch occupies residues 717 to 744 (PQEQQGALPVPGPSRSAPSSPAPRRTKQ). Positions 729–739 (PSRSAPSSPAP) are enriched in low complexity. PPR repeat units follow at residues 775 to 811 (WFLC…VVLP) and 812 to 846 (DEVC…GIVP). Disordered regions lie at residues 890 to 968 (PLKD…ARGT), 988 to 1115 (PRGS…SLGS), and 1204 to 1226 (RPSA…APAP). The segment covering 897–915 (QQQQQQQQQQQKQQVAEQQ) has biased composition (low complexity). Positions 933–942 (RPLQRQTTWA) are enriched in polar residues. At Ser951 the chain carries Phosphoserine. Residues 1074–1083 (IPPPELPSDL) show a composition bias toward pro residues. Ser1090 carries the phosphoserine modification. Residues 1103–1115 (GSTASESSASLGS) are compositionally biased toward low complexity.

The protein resides in the golgi apparatus. Its function is as follows. Guanine nucleotide exchange factor (GEF) which may activate RAB10. Promotes the exchange of GDP to GTP, converting inactive GDP-bound Rab proteins into their active GTP-bound form. The chain is DENN domain-containing protein 4B (Dennd4b) from Mus musculus (Mouse).